The chain runs to 49 residues: Feruloyl esterase A (49 aa).

This sequence belongs to the AB hydrolase superfamily. FaeA family.

Its subcellular location is the secreted. The enzyme catalyses feruloyl-polysaccharide + H2O = ferulate + polysaccharide.. In terms of biological role, involved in degradation of plant cell walls. Hydrolyzes the feruloyl-arabinose ester bond in arabinoxylans as well as the feruloyl-galactose and feruloyl-arabinose ester bonds in pectin. Active against methyl esters of sinapate (MSA), but not caffeate (MCA). This is Feruloyl esterase A from Talaromyces stipitatus (strain ATCC 10500 / CBS 375.48 / QM 6759 / NRRL 1006) (Penicillium stipitatum).